Here is a 606-residue protein sequence, read N- to C-terminus: Prostaglandin G/H synthase 1 (606 aa).

Residues 1–30 (MSRSSPSLRLPVLLLLLLLLLLPPPPPVLP) form the signal peptide. One can recognise an EGF-like domain in the interval 38-76 (PVNPCCYFPCQHQGVCVRVALDRYQCDCTRTGYSGPNCT). 4 disulfides stabilise this stretch: Cys-42/Cys-53, Cys-43/Cys-165, Cys-47/Cys-63, and Cys-65/Cys-75. N-linked (GlcNAc...) asparagine glycans are attached at residues Asn-74, Asn-110, and Asn-150. Catalysis depends on His-213, which acts as the Proton acceptor. Catalysis depends on Tyr-391, which acts as the For cyclooxygenase activity. His-394 lines the heme b pocket. Asn-416 is a glycosylation site (N-linked (GlcNAc...) asparagine). An intrachain disulfide couples Cys-575 to Cys-581.

This sequence belongs to the prostaglandin G/H synthase family. In terms of assembly, homodimer. Heme b is required as a cofactor.

It is found in the microsome membrane. Its subcellular location is the endoplasmic reticulum membrane. The catalysed reaction is (5Z,8Z,11Z,14Z)-eicosatetraenoate + AH2 + 2 O2 = prostaglandin H2 + A + H2O. It catalyses the reaction (5Z,8Z,11Z,14Z)-eicosatetraenoate + 2 O2 = prostaglandin G2. It carries out the reaction prostaglandin G2 + AH2 = prostaglandin H2 + A + H2O. The enzyme catalyses (9Z,12Z)-octadecadienoate + AH2 + O2 = (9R)-hydroxy-(10E,12Z)-octadecadienoate + A + H2O. The catalysed reaction is (9Z,12Z)-octadecadienoate + AH2 + O2 = (9S)-hydroxy-(10E,12Z)-octadecadienoate + A + H2O. It catalyses the reaction (9Z,12Z)-octadecadienoate + AH2 + O2 = (13S)-hydroxy-(9Z,11E)-octadecadienoate + A + H2O. It carries out the reaction (9Z,12Z)-octadecadienoate + AH2 + O2 = (13R)-hydroxy-(9Z,11E)-octadecadienoate + A + H2O. The protein operates within lipid metabolism; prostaglandin biosynthesis. The cyclooxygenase activity is inhibited by nonsteroidal anti-inflammatory drugs (NSAIDs) including ibuprofen, flurbiprofen, ketoprofen, naproxen, flurbiprofen, anirolac, fenclofenac and diclofenac. Dual cyclooxygenase and peroxidase that plays an important role in the biosynthesis pathway of prostanoids, a class of C20 oxylipins mainly derived from arachidonate ((5Z,8Z,11Z,14Z)-eicosatetraenoate, AA, C20:4(n-6)), with a particular role in the inflammatory response. The cyclooxygenase activity oxygenates AA to the hydroperoxy endoperoxide prostaglandin G2 (PGG2), and the peroxidase activity reduces PGG2 to the hydroxy endoperoxide prostaglandin H2 (PGH2), the precursor of all 2-series prostaglandins and thromboxanes. This complex transformation is initiated by abstraction of hydrogen at carbon 13 (with S-stereochemistry), followed by insertion of molecular O2 to form the endoperoxide bridge between carbon 9 and 11 that defines prostaglandins. The insertion of a second molecule of O2 (bis-oxygenase activity) yields a hydroperoxy group in PGG2 that is then reduced to PGH2 by two electrons. Involved in the constitutive production of prostanoids in particular in the stomach and platelets. In gastric epithelial cells, it is a key step in the generation of prostaglandins, such as prostaglandin E2 (PGE2), which plays an important role in cytoprotection. In platelets, it is involved in the generation of thromboxane A2 (TXA2), which promotes platelet activation and aggregation, vasoconstriction and proliferation of vascular smooth muscle cells. Can also use linoleate (LA, (9Z,12Z)-octadecadienoate, C18:2(n-6)) as substrate and produce hydroxyoctadecadienoates (HODEs) in a regio- and stereospecific manner, being (9R)-HODE ((9R)-hydroxy-(10E,12Z)-octadecadienoate) and (13S)-HODE ((13S)-hydroxy-(9Z,11E)-octadecadienoate) its major products. This Oryctolagus cuniculus (Rabbit) protein is Prostaglandin G/H synthase 1 (PTGS1).